A 107-amino-acid chain; its full sequence is Phosphoribosyl-ATP pyrophosphatase (107 aa).

The protein belongs to the PRA-PH family.

It localises to the cytoplasm. The enzyme catalyses 1-(5-phospho-beta-D-ribosyl)-ATP + H2O = 1-(5-phospho-beta-D-ribosyl)-5'-AMP + diphosphate + H(+). It functions in the pathway amino-acid biosynthesis; L-histidine biosynthesis; L-histidine from 5-phospho-alpha-D-ribose 1-diphosphate: step 2/9. This Bacillus cereus (strain ZK / E33L) protein is Phosphoribosyl-ATP pyrophosphatase.